The following is a 191-amino-acid chain: Ribonuclease MC (191 aa).

Gln-9 serves as a coordination point for RNA. Cys-15 and Cys-23 form a disulfide bridge. RNA is bound by residues His-34, 72–73 (NV), Arg-75, Phe-81, 84–85 (HE), and 88–89 (KH). His-34 acts as the Proton donor in catalysis. 3 disulfides stabilise this stretch: Cys-48–Cys-92, Cys-152–Cys-185, and Cys-169–Cys-180. Glu-85 is a catalytic residue. His-89 serves as the catalytic Proton acceptor.

Belongs to the RNase T2 family.

It carries out the reaction a ribonucleotidyl-ribonucleotide-RNA + H2O = a 3'-end 3'-phospho-ribonucleotide-RNA + a 5'-end dephospho-ribonucleoside-RNA + H(+). In terms of biological role, ribonuclease cleaving preferentially the 5'-side of uridine. This Momordica charantia (Bitter gourd) protein is Ribonuclease MC.